Here is a 352-residue protein sequence, read N- to C-terminus: N-acetyl-gamma-glutamyl-phosphate reductase (352 aa).

Residue Cys155 is part of the active site.

This sequence belongs to the NAGSA dehydrogenase family. Type 1 subfamily.

The protein resides in the cytoplasm. It carries out the reaction N-acetyl-L-glutamate 5-semialdehyde + phosphate + NADP(+) = N-acetyl-L-glutamyl 5-phosphate + NADPH + H(+). It functions in the pathway amino-acid biosynthesis; L-arginine biosynthesis; N(2)-acetyl-L-ornithine from L-glutamate: step 3/4. Functionally, catalyzes the NADPH-dependent reduction of N-acetyl-5-glutamyl phosphate to yield N-acetyl-L-glutamate 5-semialdehyde. This chain is N-acetyl-gamma-glutamyl-phosphate reductase, found in Synechococcus elongatus (strain ATCC 33912 / PCC 7942 / FACHB-805) (Anacystis nidulans R2).